Consider the following 149-residue polypeptide: D-aminoacyl-tRNA deacylase (149 aa).

The Gly-cisPro motif, important for rejection of L-amino acids motif lies at 139–140; sequence GP.

It belongs to the DTD family. As to quaternary structure, homodimer.

The protein resides in the cytoplasm. It carries out the reaction glycyl-tRNA(Ala) + H2O = tRNA(Ala) + glycine + H(+). The catalysed reaction is a D-aminoacyl-tRNA + H2O = a tRNA + a D-alpha-amino acid + H(+). Functionally, an aminoacyl-tRNA editing enzyme that deacylates mischarged D-aminoacyl-tRNAs. Also deacylates mischarged glycyl-tRNA(Ala), protecting cells against glycine mischarging by AlaRS. Acts via tRNA-based rather than protein-based catalysis; rejects L-amino acids rather than detecting D-amino acids in the active site. By recycling D-aminoacyl-tRNA to D-amino acids and free tRNA molecules, this enzyme counteracts the toxicity associated with the formation of D-aminoacyl-tRNA entities in vivo and helps enforce protein L-homochirality. The chain is D-aminoacyl-tRNA deacylase (DTD1) from Candida glabrata (strain ATCC 2001 / BCRC 20586 / JCM 3761 / NBRC 0622 / NRRL Y-65 / CBS 138) (Yeast).